Reading from the N-terminus, the 427-residue chain is TNF receptor-associated factor family protein DDB_G0285149 (427 aa).

The segment at 20–65 (CIVCTDLLSESHDKIQVNQCPHGHCLCSDCWTKQIENKKKECPICR) adopts an RING-type zinc-finger fold. 2 TRAF-type zinc fingers span residues 122 to 178 (THFK…INKD) and 178 to 234 (DHLE…KHQA). The 132-residue stretch at 284-415 (KYSNQWVIEN…GNKLTIKFEI (132 aa)) folds into the MATH domain.

The protein belongs to the TNF receptor-associated factor family. A subfamily.

The protein resides in the cytoplasm. Its function is as follows. Probable adapter protein and signal transducer that links members of the tumor necrosis factor receptor family to different signaling pathways by association with the receptor cytoplasmic domain and kinases. This is TNF receptor-associated factor family protein DDB_G0285149 from Dictyostelium discoideum (Social amoeba).